A 390-amino-acid chain; its full sequence is Homeobox protein Meis1 (390 aa).

The MEIS N-terminal domain occupies 108 to 192 (GGDVCSSESF…IDLVIDDREG (85 aa)). Basic and acidic residues predominate over residues 190-202 (REGGSKSDSEDVT). Residues 190-279 (REGGSKSDSE…KKRHKKRGIF (90 aa)) form a disordered region. A compositionally biased stretch (polar residues) spans 203–213 (RSANLTDQPSW). A DNA-binding region (homeobox; TALE-type) is located at residues 272-334 (RHKKRGIFPK…NARRRIVQPM (63 aa)). The interval 299–329 (YPSEEQKKQLAQDTGLTILQVNNWFINARRR) is interaction with DNA. The tract at residues 335–390 (IDQSNRAVSQGTPYNPDGQPMGGFVMDGQQHMGIRAPGPMSGMGMNMGMEGQWHYM) is required for transcriptional activation.

It belongs to the TALE/MEIS homeobox family. In terms of assembly, interacts with the N-terminal region of PBX1 to form a heterodimer which binds DNA including a cAMP-responsive sequence in CYP17. Also forms heterodimers with PBX2. Forms heterotrimers with PBX1 or PBX2 and a number of HOX proteins including HOXA9, HOXD4 and HOXD9 where it acts as a non-DNA-binding partner. Also forms heterotrimers with PBX1 and HOX proteins including HOXD9 and HOXD10 where PBX1 is the non-DNA-binding partner. Heterodimer with DLX3. Heterodimer with HOXB13. As to expression, expressed at high levels in the lung with lower levels detected in the heart and brain. Expressed in pancreatic islets (beta-cells and non-beta-cells).

The protein localises to the nucleus. Its function is as follows. Acts as a transcriptional regulator of PAX6. Also acts as a transcriptional activator of PF4 in complex with PBX1 or PBX2. Required for hematopoiesis, megakaryocyte lineage development and vascular patterning. May function as a cofactor for HOXA7 and HOXA9 in the induction of myeloid leukemias. The protein is Homeobox protein Meis1 (Meis1) of Mus musculus (Mouse).